Reading from the N-terminus, the 417-residue chain is Carboxypeptidase B (417 aa).

Residues 1-15 (MLALLVLVTVALASA) form the signal peptide. The propeptide at 16–110 (HHGGEHFEGE…VEAQFDSRVR (95 aa)) is activation peptide. One can recognise a Peptidase M14 domain in the interval 118–412 (KYNKWETIEA…LAIKYVASYV (295 aa)). An intrachain disulfide couples Cys-173 to Cys-186. Residues His-176 and Glu-179 each contribute to the Zn(2+) site. Residues 176-179 (HARE), Arg-234, and 251-252 (NR) each bind substrate. 2 cysteine pairs are disulfide-bonded: Cys-245/Cys-268 and Cys-259/Cys-273. Residue His-304 coordinates Zn(2+). Residues 305–306 (SY) and Tyr-356 each bind substrate. The Proton donor/acceptor role is filled by Glu-378.

This sequence belongs to the peptidase M14 family. Zn(2+) serves as cofactor. As to expression, pancreas.

The protein resides in the secreted. Its subcellular location is the zymogen granule lumen. The catalysed reaction is Preferential release of a C-terminal lysine or arginine amino acid.. This chain is Carboxypeptidase B (CPB1), found in Homo sapiens (Human).